The following is a 158-amino-acid chain: Nascent polypeptide-associated complex subunit beta (158 aa).

Disordered regions lie at residues 1–40 (MDQA…DKKL) and 119–158 (ESYQ…SKVE). Residues 16–31 (GKGKGTPRRKTKKVHK) are compositionally biased toward basic residues. The 66-residue stretch at 34-99 (GTDDKKLQTS…GEDKELTELV (66 aa)) folds into the NAC-A/B domain. A compositionally biased stretch (acidic residues) spans 137–152 (DDDDDDEIPDLVEGEN).

This sequence belongs to the NAC-beta family. As to quaternary structure, part of the nascent polypeptide-associated complex (NAC), consisting of EGD2 and EGD1. NAC associates with ribosomes via EGD1.

The protein resides in the cytoplasm. The protein localises to the nucleus. Functionally, component of the nascent polypeptide-associated complex (NAC), a dynamic component of the ribosomal exit tunnel, protecting the emerging polypeptides from interaction with other cytoplasmic proteins to ensure appropriate nascent protein targeting. The NAC complex also promotes mitochondrial protein import by enhancing productive ribosome interactions with the outer mitochondrial membrane and blocks the inappropriate interaction of ribosomes translating non-secretory nascent polypeptides with translocation sites in the membrane of the endoplasmic reticulum. EGD1 may act as a transcription factor that exert a negative effect on the expression of several genes that are transcribed by RNA polymerase II. The chain is Nascent polypeptide-associated complex subunit beta (EGD1) from Ajellomyces capsulatus (strain NAm1 / WU24) (Darling's disease fungus).